The primary structure comprises 572 residues: Receptor-type adenylate cyclase GRESAG 4.2 (572 aa).

Residues 1-225 (RKTLLTFGLN…PNGNALTPAQ (225 aa)) lie on the Extracellular side of the membrane. N-linked (GlcNAc...) asparagine glycans are attached at residues asparagine 10, asparagine 77, and asparagine 152. The helical transmembrane segment at 226-251 (LDWCGWCRFACADTGSRLTVFLCCIM) threads the bilayer. The Cytoplasmic portion of the chain corresponds to 252 to 572 (RNKRDNDNAP…TVRRLSVALQ (321 aa)). A Guanylate cyclase domain is found at 269-424 (TLIFTDIESS…QTANTAARTE (156 aa)). 2 residues coordinate Mg(2+): aspartate 274 and aspartate 317.

The protein belongs to the adenylyl cyclase class-3 family. It depends on Mg(2+) as a cofactor.

It localises to the cell membrane. The enzyme catalyses ATP = 3',5'-cyclic AMP + diphosphate. Functionally, could act as a receptor for an unknown ligand. The polypeptide is Receptor-type adenylate cyclase GRESAG 4.2 (GRESAG 4.2) (Trypanosoma brucei brucei).